Here is a 187-residue protein sequence, read N- to C-terminus: MDAIIIFLILFIVGVLIGVGVYYYKEKERKKTYKIIEMEIIENLKELKPYVAPDEGREYTKEFDLVEIALSYDIEDIIVVNDEGLVIATTLKDADEVGATASSIFEYIKKLCGNIKKVVIFKEDSYLYIYPLKLYGENLYVIIESKIALDVIEEKEILKRITGVLKKYFSTITTIEQEIPEEALLSI.

The helical transmembrane segment at 3 to 23 (AIIIFLILFIVGVLIGVGVYY) threads the bilayer.

It is found in the membrane. This is an uncharacterized protein from Methanocaldococcus jannaschii (strain ATCC 43067 / DSM 2661 / JAL-1 / JCM 10045 / NBRC 100440) (Methanococcus jannaschii).